The chain runs to 99 residues: U1-theraphotoxin-Lsp1b (99 aa).

Positions 1–23 (MRSLTLAALLLCSLLLVFHTSAA) are cleaved as a signal peptide. Positions 24 to 50 (EELQAQEGHLMIPGDTDTALETVDDER) are excised as a propeptide. 4 disulfides stabilise this stretch: C54–C67, C58–C91, C72–C74, and C85–C96.

The protein belongs to the neurotoxin 12 (Hwtx-2) family. 04 (lasiotoxin) subfamily. Expressed by the venom gland.

It localises to the secreted. In terms of biological role, toxin that causes irreversible contractile paralysis into adult Aedes aegypti resulting in 100% mortality after 24 hours. The sequence is that of U1-theraphotoxin-Lsp1b from Lasiodora sp. (strain IBSP 8539) (Brazilian salmon pink birdeater).